A 486-amino-acid polypeptide reads, in one-letter code: MSVVTRFAPSPTGMLHIGGARTALFNYLFARRNGGRFLLRIEDTDRERSTQEATDAILDAMEWLGLTPDEPPVMQSAQVDRHAAVAHDMVARGTAFRCYVTPEELQARRDLGEEKRQAAKQEGISDAEKEALLAEASQLLAPFRSPYRDGASPPSPDAPFTVRLRAPESGPRTVEDGVQGTVTIDASEIDDLVMLRADGTPTYMLAVVVDDHDMGITHVIRGDDHLRNTFRQVPIYEAMGWSVPNFSHVPMIHGNDGAKLSKRHGALSTTAYRDMGYLPEAMKAYLLRLGWSHGDQEIFTDEEAVQVFDVSGINKAPARLDLDKLATVNAHFMRLAADERLFDLICPVLSKNCSLSDAEVARIRAALPHMKDRGSTLIELANAFAFLYAKRPLELNKNAVKALSDEGKLRLKGLYDDLQRMSQWSGASISETIKSYCAATGLSMGQIGPPLRAALTGGLPAPDLAPVMDWLGREETLARIDDQLAG.

Positions 9-19 (PSPTGMLHIGG) match the 'HIGH' region motif. Residues 259–263 (KLSKR) carry the 'KMSKS' region motif. Residue Lys-262 participates in ATP binding.

Belongs to the class-I aminoacyl-tRNA synthetase family. Glutamate--tRNA ligase type 1 subfamily. In terms of assembly, monomer.

The protein localises to the cytoplasm. It catalyses the reaction tRNA(Glu) + L-glutamate + ATP = L-glutamyl-tRNA(Glu) + AMP + diphosphate. Its function is as follows. Catalyzes the attachment of glutamate to tRNA(Glu) in a two-step reaction: glutamate is first activated by ATP to form Glu-AMP and then transferred to the acceptor end of tRNA(Glu). The protein is Glutamate--tRNA ligase 1 of Hyphomonas neptunium (strain ATCC 15444).